The primary structure comprises 475 residues: MEMASSAGSWLSGCLIPLVFLRLSVHVSGHAGDAGKFHVALLGGTAELLCPLSLWPGTVPKEVRWLRSPFPQRSQAVHIFRDGKDQDEDLMPEYKGRTVLVRDAQEGSVTLQILDVRLEDQGSYRCLIQVGNLSKEDTVILQVAAPSVGSLSPSAVALAVILPVLVLLIMVCLCLIWKQRRAKEKLLYEHVTEVDNLLSDHAKEKGKLHKAVKKLRSELKLKRAAANSGWRRARLHFVAVTLDPDTAHPKLILSEDQRCVRLGDRRQPVPDNPQRFDFVVSILGSEYFTTGCHYWEVYVGDKTKWILGVCSESVSRKGKVTASPANGHWLLRQSRGNEYEALTSPQTSFRLKEPPRCVGIFLDYEAGVISFYNVTNKSHIFTFTHNFSGPLRPFFEPCLHDGGKNTAPLVICSELHKSEESIVPRPEGKGHANGDVSLKVNSSLLPPKAPELKDIILSLPPDLGPALQELKAPSF.

Positions 1–29 (MEMASSAGSWLSGCLIPLVFLRLSVHVSG) are cleaved as a signal peptide. The Ig-like V-type domain occupies 30-140 (HAGDAGKFHV…GNLSKEDTVI (111 aa)). Over 30–155 (HAGDAGKFHV…PSVGSLSPSA (126 aa)) the chain is Extracellular. The cysteines at positions 50 and 126 are disulfide-linked. An N-linked (GlcNAc...) asparagine glycan is attached at asparagine 132. A helical membrane pass occupies residues 156–176 (VALAVILPVLVLLIMVCLCLI). Topologically, residues 177 to 475 (WKQRRAKEKL…ALQELKAPSF (299 aa)) are cytoplasmic. One can recognise a B30.2/SPRY domain in the interval 220-418 (KLKRAAANSG…LVICSELHKS (199 aa)). Serine 418 carries the phosphoserine modification.

Belongs to the immunoglobulin superfamily. BTN/MOG family. Post-translationally, glycosylated. In terms of tissue distribution, expressed in erythroid-enriched bone marrow (at protein level). Highly expressed in bone marrow and to a lower extent in leukocytes, thymus, lymph node and spleen.

The protein resides in the cell membrane. It is found in the cytoplasm. Functionally, possible role as a cell-adhesion or receptor molecule of erythroid cells. The chain is Erythroid membrane-associated protein (ERMAP) from Homo sapiens (Human).